A 1410-amino-acid chain; its full sequence is SNF2 domain-containing protein CLASSY 3 (1410 aa).

A compositionally biased stretch (basic residues) spans 1 to 12 (MECIGKRVKSRS). Disordered regions lie at residues 1 to 74 (MECI…SVPN), 87 to 108 (DLNV…SEQN), 209 to 330 (GEIE…PIKR), 344 to 376 (RSGS…QREV), 428 to 593 (NVSK…LKDK), and 632 to 654 (EDEA…REDH). A Nuclear localization signal 1 motif is present at residues 22–29 (RKKMETVA). The span at 95–108 (GPSSSRLTDGSEQN) shows a compositional bias: polar residues. A compositionally biased stretch (acidic residues) spans 245–266 (SDGEDSSSETDEEEEENQDSED). Positions 248-278 (EDSSSETDEEEEENQDSEDNNTKDNVTVESL) form a coiled coil. Residues 276 to 301 (ESLSSEDPSSSSSSSSSSSSSSSSSS) show a composition bias toward low complexity. Over residues 306–323 (SYVKEVVGDNRDDDDLRK) the composition is skewed to basic and acidic residues. Residues 328–335 (IKRVSLVE) carry the Nuclear localization signal 2 motif. Over residues 351-376 (KPRERDNKIQKLNHREEEKKERQREV) the composition is skewed to basic and acidic residues. Positions 356–377 (DNKIQKLNHREEEKKERQREVV) form a coiled coil. Positions 428–446 (NVSKYEDSVSINSGKTTGA) are enriched in polar residues. Basic and acidic residues-rich tracts occupy residues 450-463 (PEVE…ELNT) and 488-504 (EPSR…KEVQ). Residues 576 to 587 (SSISSGDGYESD) are compositionally biased toward low complexity. The Helicase ATP-binding domain maps to 850–1060 (FENSDETGGC…CNVLGLARPK (211 aa)). Position 863 to 870 (863 to 870 (HAPGTGKT)) interacts with ATP. The DEAH box motif lies at 1011–1014 (DEAH). Residues 1132 to 1139 (QRRVLESI) carry the Nuclear localization signal 3 motif. A Helicase C-terminal domain is found at 1206 to 1359 (EFVELCEVIK…ELVFACSSRH (154 aa)).

Belongs to the SNF2/RAD54 helicase family. As to quaternary structure, interacts with NRPD1.

Its subcellular location is the nucleus. In terms of biological role, probable chromatin remodeling factor. The polypeptide is SNF2 domain-containing protein CLASSY 3 (CLSY3) (Arabidopsis thaliana (Mouse-ear cress)).